The sequence spans 470 residues: MPADLAARTSSKIFNGVDLMDASARADNAFYLDRQERRESNARSYPRRFPVALKSASGCIVTDVDGRSYLDCLAGAGTLALGHNHPEVIETLQQVLGSGLPLHTLDLTTPVKDRFVSDIFGTLPAGLRDEAKIQFCSPSGTDAVEAAIKLAKTATGRTDLVSFRGAYHGMSQGSLSLMGSLGPKASVGQLVPGAHFFPYPYAYRCPFGRGGNETATLAAEYFERALRDPEGGINRPAAVILEAVQGEGGVIPAPVEWLRAVRRVTRDLGIPLIVDEVQSGVGRTGSFYAFQKAGIIPDVVVLSKAIGGGLPLAVVIYREDLDLWKPGAHAGTFRGNQLAMAAGSKTLEIIERERLVERAAIAGRRLRANLERIAAQTPYIGEVRGEGLMLGVEVVDPEGLPDALGHPPHGQEIARMIQHEMFRAGIILETGGRFGSVLRLLPPLVISDAEIDQVSGALAAAFERLGRKAA.

Residue K304 is modified to N6-(pyridoxal phosphate)lysine.

Belongs to the class-III pyridoxal-phosphate-dependent aminotransferase family. Requires pyridoxal 5'-phosphate as cofactor.

The catalysed reaction is L-2,4-diaminobutanoate + 2-oxoglutarate = L-aspartate 4-semialdehyde + L-glutamate. It functions in the pathway siderophore biosynthesis; rhizobactin biosynthesis. This is Diaminobutyrate--2-oxoglutarate aminotransferase (rhbA) from Rhizobium meliloti (strain 1021) (Ensifer meliloti).